The following is a 134-amino-acid chain: Spermadhesin-1 (134 aa).

The N-terminal stretch at 1–20 (MKLSSVIPWALLLSTATVDS) is a signal peptide. Disulfide bonds link cysteine 30–cysteine 51 and cysteine 74–cysteine 95. Positions 30–131 (CGGILKEESG…SFYEVLYFQD (102 aa)) constitute a CUB domain.

Belongs to the spermadhesin family. As to expression, seminal vesicle tissue, ampulla and weakly in tissue of epididymis.

The protein resides in the secreted. Its function is as follows. Stimulates cell division and progesterone secretion of bovine granulosa cells in vitro in a potent and dose dependent manner. This protein appears to be a potent growth factor with effects on ovarian granulosa cells. The polypeptide is Spermadhesin-1 (SPADH1) (Bos taurus (Bovine)).